The following is a 334-amino-acid chain: Probable GTP 3',8-cyclase (334 aa).

One can recognise a Radical SAM core domain in the interval 24–256 (PYGRKVTGLR…RKKYMIDGVE (233 aa)). Arginine 33 contributes to the GTP binding site. 2 residues coordinate [4Fe-4S] cluster: cysteine 40 and cysteine 44. Tyrosine 46 serves as a coordination point for S-adenosyl-L-methionine. Position 47 (cysteine 47) interacts with [4Fe-4S] cluster. GTP is bound at residue lysine 85. Glycine 89 serves as a coordination point for S-adenosyl-L-methionine. Threonine 113 contributes to the GTP binding site. Serine 137 serves as a coordination point for S-adenosyl-L-methionine. Lysine 176 contacts GTP. Residues cysteine 269 and cysteine 272 each contribute to the [4Fe-4S] cluster site. Residue 274–276 (RLR) participates in GTP binding. Residue cysteine 286 coordinates [4Fe-4S] cluster.

It belongs to the radical SAM superfamily. MoaA family. [4Fe-4S] cluster is required as a cofactor.

It catalyses the reaction GTP + AH2 + S-adenosyl-L-methionine = (8S)-3',8-cyclo-7,8-dihydroguanosine 5'-triphosphate + 5'-deoxyadenosine + L-methionine + A + H(+). The protein operates within cofactor biosynthesis; molybdopterin biosynthesis. Its function is as follows. Catalyzes the cyclization of GTP to (8S)-3',8-cyclo-7,8-dihydroguanosine 5'-triphosphate. The sequence is that of Probable GTP 3',8-cyclase from Methanosarcina mazei (strain ATCC BAA-159 / DSM 3647 / Goe1 / Go1 / JCM 11833 / OCM 88) (Methanosarcina frisia).